The following is a 320-amino-acid chain: o-succinylbenzoate synthase (320 aa).

The active-site Proton donor is K133. Residues D161, E190, and D213 each coordinate Mg(2+). K235 (proton acceptor) is an active-site residue.

It belongs to the mandelate racemase/muconate lactonizing enzyme family. MenC type 1 subfamily. The cofactor is a divalent metal cation.

The enzyme catalyses (1R,6R)-6-hydroxy-2-succinyl-cyclohexa-2,4-diene-1-carboxylate = 2-succinylbenzoate + H2O. The protein operates within quinol/quinone metabolism; 1,4-dihydroxy-2-naphthoate biosynthesis; 1,4-dihydroxy-2-naphthoate from chorismate: step 4/7. Its pathway is quinol/quinone metabolism; menaquinone biosynthesis. Its function is as follows. Converts 2-succinyl-6-hydroxy-2,4-cyclohexadiene-1-carboxylate (SHCHC) to 2-succinylbenzoate (OSB). This chain is o-succinylbenzoate synthase, found in Escherichia coli O6:K15:H31 (strain 536 / UPEC).